The chain runs to 418 residues: Galactooligosaccharides transport system permease protein GanP (418 aa).

9 helical membrane-spanning segments follow: residues 25–45 (IKGIVFLFLGASFFAVFGDLL), 65–85 (VFLLAEGIIAVIVTCFGLAVY), 129–149 (LFILIFAVIFPILFSFALAFT), 191–211 (VVWTLAASTLQVTLGIFLAII), 226–246 (ILILPWAVPGFVTILIFAGLF), 279–299 (LILMQGWLGFPYIFLVSTGVL), 323–343 (YITLPMVFIAMAPIIITQFTF), 357–379 (GGPAVTGSTAGGTDILVSWIYKL), and 388–408 (LAAALTILLSVFVISIALWQF). The ABC transmembrane type-1 domain maps to 187-407 (LAWTVVWTLA…VFVISIALWQ (221 aa)).

The protein belongs to the binding-protein-dependent transport system permease family. As to quaternary structure, the complex is composed of two ATP-binding proteins (MsmX), two transmembrane proteins (GanP and GanQ) and a solute-binding protein (GanS).

The protein resides in the cell membrane. Functionally, involved in galactan degradation. Part of the ABC transporter complex GanPQS involved in the uptake of galactooligosaccharides. Responsible for the translocation of the substrate across the membrane. The chain is Galactooligosaccharides transport system permease protein GanP (ganP) from Bacillus subtilis (strain 168).